A 251-amino-acid polypeptide reads, in one-letter code: Ribosomal RNA small subunit methyltransferase J (251 aa).

Residues 100–101 (RD), 116–117 (ER), and D170 each bind S-adenosyl-L-methionine.

Belongs to the methyltransferase superfamily. RsmJ family.

Its subcellular location is the cytoplasm. The catalysed reaction is guanosine(1516) in 16S rRNA + S-adenosyl-L-methionine = N(2)-methylguanosine(1516) in 16S rRNA + S-adenosyl-L-homocysteine + H(+). Functionally, specifically methylates the guanosine in position 1516 of 16S rRNA. In Actinobacillus pleuropneumoniae serotype 5b (strain L20), this protein is Ribosomal RNA small subunit methyltransferase J.